We begin with the raw amino-acid sequence, 544 residues long: Chaperonin GroEL (544 aa).

Residues 29–32 (TLGP), 86–90 (DGTTT), Gly-413, 476–478 (NAA), and Asp-492 contribute to the ATP site.

Belongs to the chaperonin (HSP60) family. Forms a cylinder of 14 subunits composed of two heptameric rings stacked back-to-back. Interacts with the co-chaperonin GroES.

It is found in the cytoplasm. It catalyses the reaction ATP + H2O + a folded polypeptide = ADP + phosphate + an unfolded polypeptide.. Together with its co-chaperonin GroES, plays an essential role in assisting protein folding. The GroEL-GroES system forms a nano-cage that allows encapsulation of the non-native substrate proteins and provides a physical environment optimized to promote and accelerate protein folding. This is Chaperonin GroEL from Halalkalibacterium halodurans (strain ATCC BAA-125 / DSM 18197 / FERM 7344 / JCM 9153 / C-125) (Bacillus halodurans).